Consider the following 360-residue polypeptide: Codeine O-demethylase (360 aa).

The Fe2OG dioxygenase domain occupies glycine 211–serine 311. Position 220 (tyrosine 220) interacts with 2-oxoglutarate. Residues histidine 235, aspartate 237, and histidine 292 each contribute to the Fe cation site. Positions 302 and 304 each coordinate 2-oxoglutarate.

The protein belongs to the iron/ascorbate-dependent oxidoreductase family. L-ascorbate is required as a cofactor. Requires Fe cation as cofactor. As to expression, mainly expressed in stems, capsules and leaves and, to a lower extent, in roots.

It catalyses the reaction codeine + 2-oxoglutarate + O2 = morphine + formaldehyde + succinate + CO2. The catalysed reaction is thebaine + 2-oxoglutarate + O2 = oripavine + formaldehyde + succinate + CO2. The enzyme catalyses (S)-scoulerine + 2-oxoglutarate + O2 = (S)-3-O-demethylscoulerine + formaldehyde + succinate + CO2. It carries out the reaction thebaine + 2-oxoglutarate + O2 = neopinone + formaldehyde + succinate + CO2. It catalyses the reaction (S)-reticuline + 2-oxoglutarate + O2 = (S)-6-O-demethylreticuline + formaldehyde + succinate + CO2. The catalysed reaction is (S)-tetrahydropalmatine + S-adenosyl-L-methionine = (S)-cis-N-methyltetrahydropalmatine + S-adenosyl-L-homocysteine. It functions in the pathway alkaloid biosynthesis; morphine biosynthesis. With respect to regulation, moderate substrate inhibition. Not inhibited in vitro by acylcyclohexanediones. In terms of biological role, non-heme dioxygenase involved in biosynthesis of morphinan-type benzylisoquinoline and opiate alkaloids natural products. Mediates the conversion of codeine to morphine. Also catalyzes, with lower efficiency, the 3-O-demethylation of thebaine to oripavine and of (S)-scoulerine to 3-O-demethylscoulerine. Supports, with a lower turnover, the conversion of codeinone to morphinone, of thebaine to neopinone, and of neopine to neomorphine. Supports dealkylation reactions such as O,O-demethylenation in the metabolism of protopine, benzo[c]phenanthridine, and rhoeadine alkaloids; cleaves a methylenedioxy bridge leaving two hydroxyl groups. Catalyzes the O,O-demethylenation of methylenedioxy bridges on protopine alkaloids such as allocryptopine, cryptopine and protopine. No activity with (S)-reticuline, salutaridine, papaverine, (S)-corytuberine, oripavine, pavine or noscapine. The chain is Codeine O-demethylase from Papaver somniferum (Opium poppy).